The primary structure comprises 542 residues: GMP synthase [glutamine-hydrolyzing] (542 aa).

Residues 28–218 form the Glutamine amidotransferase type-1 domain; sequence IIVILDFGSQ…VYHICHCEPT (191 aa). C105 (nucleophile) is an active-site residue. Catalysis depends on residues H192 and E194. The GMPS ATP-PPase domain occupies 219-417; the sequence is WTTAAFIEES…IGLPEEIVRR (199 aa). ATP is bound at residue 246-252; it reads SGGVDSS.

As to quaternary structure, homodimer.

It catalyses the reaction XMP + L-glutamine + ATP + H2O = GMP + L-glutamate + AMP + diphosphate + 2 H(+). Its pathway is purine metabolism; GMP biosynthesis; GMP from XMP (L-Gln route): step 1/1. Functionally, catalyzes the synthesis of GMP from XMP. This chain is GMP synthase [glutamine-hydrolyzing] (guaA), found in Synechocystis sp. (strain ATCC 27184 / PCC 6803 / Kazusa).